The sequence spans 76 residues: Bacteriocin uberolysin (76 aa).

Positions 1–6 (MDILLE) are excised as a propeptide. A cross-link (cyclopeptide (Leu-Trp)) is located at residues 7-76 (LAGYTGIASG…RNLKAQAVIW (70 aa)).

This sequence belongs to the bacteriocin class V family.

The protein resides in the secreted. Cyclopeptide antibiotic with bacteriolytic activity against most streptococci (except S.rattus and S.mutans), Listeria spp., enterococci and staphylococci. The sequence is that of Bacteriocin uberolysin (ublA) from Streptococcus uberis.